We begin with the raw amino-acid sequence, 487 residues long: Serine/threonine-protein kinase 4 (487 aa).

N-acetylmethionine is present on Met-1. A Phosphothreonine modification is found at Thr-3. Residues 30-281 (FDVLEKLGEG…ATQLLQHPFV (252 aa)) enclose the Protein kinase domain. Residues 36–44 (LGEGSYGSV) and Lys-59 each bind ATP. Catalysis depends on Asp-149, which acts as the Proton acceptor. Position 183 is a phosphothreonine; by autocatalysis (Thr-183). Residue Ser-265 is modified to Phosphoserine. A coiled-coil region spans residues 290-310 (LRDLINEAMDVKLKRQESQQR). Residues 303–312 (KRQESQQREV) are compositionally biased toward basic and acidic residues. The segment at 303–332 (KRQESQQREVDQDDEENSEEDEMDSGTMVR) is disordered. Acidic residues predominate over residues 313–326 (DQDDEENSEEDEMD). Ser-320 carries the phosphoserine modification. A phosphothreonine mark is found at Thr-340 and Thr-367. Phosphothreonine; by PKB/AKT1 is present on Thr-387. 2 positions are modified to phosphoserine: Ser-410 and Ser-414. Phosphotyrosine is present on Tyr-433. One can recognise an SARAH domain in the interval 433–480 (YEFLKSWTVEDLQKRLLALDPMMEQEIEEIRQKYQSKRQPILDAIEAK).

Belongs to the protein kinase superfamily. STE Ser/Thr protein kinase family. STE20 subfamily. As to quaternary structure, homodimer; mediated via the coiled-coil region. Interacts with NORE1, which inhibits autoactivation. Interacts with and stabilizes SAV1. Interacts with RASSF1. Interacts with FOXO3. Interacts with RASSF2 (via SARAH domain). Interacts with AR, PKB/AKT1, TNNI3 and SIRT1. Interacts with DLG5 (via PDZ domain 3). Interacts with MARK3 and SCRIB in the presence of DLG5. Mg(2+) is required as a cofactor. In terms of processing, autophosphorylated on serine and threonine residues. Phosphorylation at Thr-387 by PKB/AKT1, leads to inhibition of its: kinase activity, nuclear translocation and autophosphorylation at Thr-183. It also diminishes its cleavage by caspases and its ability to phosphorylate FOXO3. Proteolytically cleaved by caspase-3 during apoptosis at Asp-326 and Asp-349 resulting in a 37 kDa or a 39 kDa subunit respectively. The 39 kDa subunit is further cleaved into the 37 kDa form. Proteolytic cleavage results in kinase activation and nuclear translocation of the truncated form (MST1/N). It is less likely that cleavage at Asp-349 is a prerequisite for activation as this site is not conserved in the murine ortholog.

It localises to the cytoplasm. Its subcellular location is the nucleus. It catalyses the reaction L-seryl-[protein] + ATP = O-phospho-L-seryl-[protein] + ADP + H(+). The catalysed reaction is L-threonyl-[protein] + ATP = O-phospho-L-threonyl-[protein] + ADP + H(+). Its activity is regulated as follows. Inhibited by the C-terminal non-catalytic region. Activated by caspase-cleavage. Full activation also requires homodimerization and autophosphorylation of Thr-183. Activated by RASSF1 which acts by preventing its dephosphorylation. Stress-activated, pro-apoptotic kinase which, following caspase-cleavage, enters the nucleus and induces chromatin condensation followed by internucleosomal DNA fragmentation. Key component of the Hippo signaling pathway which plays a pivotal role in organ size control and tumor suppression by restricting proliferation and promoting apoptosis. The core of this pathway is composed of a kinase cascade wherein STK3/MST2 and STK4/MST1, in complex with its regulatory protein SAV1, phosphorylates and activates LATS1/2 in complex with its regulatory protein MOB1, which in turn phosphorylates and inactivates YAP1 oncoprotein and WWTR1/TAZ. Phosphorylation of YAP1 by LATS2 inhibits its translocation into the nucleus to regulate cellular genes important for cell proliferation, cell death, and cell migration. STK3/MST2 and STK4/MST1 are required to repress proliferation of mature hepatocytes, to prevent activation of facultative adult liver stem cells (oval cells), and to inhibit tumor formation. Phosphorylates 'Ser-14' of histone H2B (H2BS14ph) during apoptosis. Phosphorylates FOXO3 upon oxidative stress, which results in its nuclear translocation and cell death initiation. Phosphorylates MOBKL1A, MOBKL1B and RASSF2. Phosphorylates TNNI3 (cardiac Tn-I) and alters its binding affinity to TNNC1 (cardiac Tn-C) and TNNT2 (cardiac Tn-T). Phosphorylates FOXO1 on 'Ser-212' and regulates its activation and stimulates transcription of PMAIP1 in a FOXO1-dependent manner. Phosphorylates SIRT1 and inhibits SIRT1-mediated p53/TP53 deacetylation, thereby promoting p53/TP53 dependent transcription and apoptosis upon DNA damage. Acts as an inhibitor of PKB/AKT1. Phosphorylates AR on 'Ser-650' and suppresses its activity by intersecting with PKB/AKT1 signaling and antagonizing formation of AR-chromatin complexes. The polypeptide is Serine/threonine-protein kinase 4 (STK4) (Papio anubis (Olive baboon)).